Here is a 99-residue protein sequence, read N- to C-terminus: Nucleoid-associated protein EbfC (99 aa).

Belongs to the YbaB/EbfC family. Homodimer.

The protein localises to the cytoplasm. Its subcellular location is the nucleoid. In terms of biological role, binds to DNA and alters its conformation. May be involved in regulation of gene expression, nucleoid organization and DNA protection. In Borreliella afzelii (strain PKo) (Borrelia afzelii), this protein is Nucleoid-associated protein EbfC.